The following is a 116-amino-acid chain: Ribosome-binding factor A (116 aa).

Belongs to the RbfA family. In terms of assembly, monomer. Binds 30S ribosomal subunits, but not 50S ribosomal subunits or 70S ribosomes.

It localises to the cytoplasm. One of several proteins that assist in the late maturation steps of the functional core of the 30S ribosomal subunit. Associates with free 30S ribosomal subunits (but not with 30S subunits that are part of 70S ribosomes or polysomes). Required for efficient processing of 16S rRNA. May interact with the 5'-terminal helix region of 16S rRNA. In Malacoplasma penetrans (strain HF-2) (Mycoplasma penetrans), this protein is Ribosome-binding factor A.